Consider the following 630-residue polypeptide: Protein mono-ADP-ribosyltransferase PARP6 (630 aa).

The residue at position 237 (cysteine 237) is an ADP-ribosylcysteine. Residues 394–620 (EMTQGSYLEI…QDPKIQKEIM (227 aa)) enclose the PARP catalytic domain. Aspartate 600 is modified (ADP-ribosyl aspartic acid).

Belongs to the ARTD/PARP family. In terms of processing, auto-mono-ADP-ribosylated.

It catalyses the reaction L-aspartyl-[protein] + NAD(+) = 4-O-(ADP-D-ribosyl)-L-aspartyl-[protein] + nicotinamide. The enzyme catalyses L-cysteinyl-[protein] + NAD(+) = S-(ADP-D-ribosyl)-L-cysteinyl-[protein] + nicotinamide + H(+). Its function is as follows. Mono-ADP-ribosyltransferase that mediates mono-ADP-ribosylation of target proteins. This is Protein mono-ADP-ribosyltransferase PARP6 from Homo sapiens (Human).